A 499-amino-acid polypeptide reads, in one-letter code: Lysine--tRNA ligase (499 aa).

Mg(2+) is bound by residues glutamate 408 and glutamate 415.

It belongs to the class-II aminoacyl-tRNA synthetase family. Homodimer. Requires Mg(2+) as cofactor.

The protein localises to the cytoplasm. The enzyme catalyses tRNA(Lys) + L-lysine + ATP = L-lysyl-tRNA(Lys) + AMP + diphosphate. The polypeptide is Lysine--tRNA ligase (Bacillus cytotoxicus (strain DSM 22905 / CIP 110041 / 391-98 / NVH 391-98)).